We begin with the raw amino-acid sequence, 670 residues long: Methionine--tRNA ligase (670 aa).

A 'HIGH' region motif is present at residues 14–24; sequence PYANGHLHLGH. 4 residues coordinate Zn(2+): C145, C148, C158, and C161. A 'KMSKS' region motif is present at residues 330–334; sequence KMSKS. Residue K333 participates in ATP binding. The tRNA-binding domain occupies 570–670; the sequence is DFAKVDLRIA…AGALPGMKVK (101 aa).

The protein belongs to the class-I aminoacyl-tRNA synthetase family. MetG type 1 subfamily. In terms of assembly, homodimer. Zn(2+) serves as cofactor.

The protein resides in the cytoplasm. It carries out the reaction tRNA(Met) + L-methionine + ATP = L-methionyl-tRNA(Met) + AMP + diphosphate. Its function is as follows. Is required not only for elongation of protein synthesis but also for the initiation of all mRNA translation through initiator tRNA(fMet) aminoacylation. This Legionella pneumophila subsp. pneumophila (strain Philadelphia 1 / ATCC 33152 / DSM 7513) protein is Methionine--tRNA ligase.